We begin with the raw amino-acid sequence, 321 residues long: Hydrolase 3 (321 aa).

An Involved in the stabilization of the negatively charged intermediate by the formation of the oxyanion hole motif is present at residues 80–82 (HGA). Catalysis depends on residues Ser172 and Asp267.

The protein belongs to the 'GDXG' lipolytic enzyme family.

It catalyses the reaction dihydroprecondylocarpine acetate + NADPH = (+)-vincadifformine + acetate + NADP(+). It participates in alkaloid biosynthesis. In terms of biological role, component of the seco-iridoid and derivatives monoterpenoid indole alkaloids (MIAs, e.g. vincadifformine) biosynthesis pathway. Catalyzes the conversion of O-acetylstemmadenine (OAS) to vincadifformine. May also trigger the formation of additional unknown MIAs. This is Hydrolase 3 from Catharanthus roseus (Madagascar periwinkle).